Here is a 189-residue protein sequence, read N- to C-terminus: High affinity copper uptake protein 1 (189 aa).

The Extracellular segment spans residues 1 to 67 (MDHSAHMGMS…AGLVINTAGE (67 aa)). The short motif at 13-18 (MGMSDM) is the Methionine segments (Mets) motif element. Residues 15 to 36 (MSDMNHSTTMPPSHHHPTSSGS) are disordered. A compositionally biased stretch (low complexity) spans 20–36 (HSTTMPPSHHHPTSSGS). Residues 68–88 (MAGAFVAVFLLAMFYEGLKIA) form a helical membrane-spanning segment. At 89–131 (REGLLRKSQVSIRYNSMPVPGPNGTILMETHKTVGQQMLSFPH) the chain is on the cytoplasmic side. Residue Thr113 is modified to Phosphothreonine. Residues 132–152 (LLQTVLHIIQVVISYFLMLIF) form a helical membrane-spanning segment. Residues 153 to 155 (MTY) lie on the Extracellular side of the membrane. A helical transmembrane segment spans residues 156–176 (NGYLCIAVAAGAGTGYFLFSW). Over 177 to 189 (KKAVVVDITEHCH) the chain is Cytoplasmic. Cys188 carries the post-translational modification Cysteine sulfenic acid (-SOH).

The protein belongs to the copper transporter (Ctr) (TC 1.A.56) family. SLC31A subfamily. As to quaternary structure, homotrimer; is stabilized by cisplatin via interactions between cisplatin and the methionine-rich clusters, and could be crucial for the copper(2+) reduction process and copper(1+) stabilization. Heterotrimer between SLC31A1, CCS and SOD1; this heterotrimer is copper(1+)-mediated and its maintenance is regulated through SOD1 activation. Interacts with KDR; this interaction is induced upon VEGFA stimulation leading to SLC31A1 and KDR subsequent co-internalization to early endosomes, thereby activating KDR downstream signaling in endothelial cells. Interacts (via C-terminal domain) with ATOX1 (via dimer form); this interaction improves ATOX1 stability and controls intracellular copper(1+) levels. Interacts with SLC31A2; this interaction stabilizes SLC31A2 and protects its from ubiquitination and degradation. Interacts (via C-terminal domain) with CCS; this interaction is copper(1+)-mediated. In terms of processing, proteolytic cleavage, leading to a truncated form, is facilitated by SLC31A2 and initiated preferentially by CTSL and to a minor extend by CTSB in endolysosomal compartments. A post-CTSL/cathepsin L processing occurs to yield to the fully truncated form. Sulfenylated at Cys-188 after stimulation with VEGFA, which induces SLC31A1-KDR disulfide bond formation and their co-internalization to early endosomes, driving to a sustained VEGFR2 signaling.

The protein resides in the cell membrane. Its subcellular location is the early endosome membrane. It localises to the recycling endosome membrane. It is found in the apical cell membrane. The protein localises to the late endosome membrane. The protein resides in the basolateral cell membrane. The enzyme catalyses Ag(+)(out) = Ag(+)(in). It catalyses the reaction Cu(+)(out) = Cu(+)(in). Functionally, uniporter that mediates the transport of copper(1+) from the extracellular space to the cytoplasm, across the plasma membrane and delivers directly copper(1+) to specific chaperone such as ATOX1, via a copper(1+)- mediated transient interaction between the C-terminal domain and a copper(1+) chaperone, thus controlling intracellular copper(1+) levels. May function in copper(1+) import from the apical membrane thus may drive intestinal copper absorption. The copper(1+) transport mechanism is sodium-independent, saturable and of high-affinity. Also mediates the uptake of silver(1+). May function in the influx of the platinum-containing chemotherapeutic agents. The platinum-containing chemotherapeutic agents uptake is saturable. In vitro, mediates the transport of cadmium(2+) into cells. Also participates in the first step of copper(2+) acquisition by cells through a direct transfer of copper(2+) from copper(2+) carriers in blood, such as ALB to the N-terminal domain of SLC31A1, leading to copper(2+) reduction and probably followed by copper(1+) stabilization. In addition, functions as a redox sensor to promote angiogenesis in endothelial cells, in a copper(1+) transport independent manner, by transmitting the VEGF-induced ROS signal through a sulfenylation at Cys-189 leadin g to a subsequent disulfide bond formation between SLC31A1 and KDR. The SLC31A1-KDR complex is then co-internalized to early endosomes, driving a sustained VEGFR2 signaling. Its function is as follows. Mobilizes copper(1+) out of the endosomal compartment, making copper(1+) available for export out of the cells. In Sus scrofa (Pig), this protein is High affinity copper uptake protein 1.